We begin with the raw amino-acid sequence, 309 residues long: Formamidopyrimidine-DNA glycosylase (309 aa).

Pro-2 (schiff-base intermediate with DNA) is an active-site residue. The active-site Proton donor is the Glu-3. Lys-56 (proton donor; for beta-elimination activity) is an active-site residue. DNA is bound by residues His-106 and Arg-129. The FPG-type zinc finger occupies 271–305 (NVYGRQGNACPHCESTLENIKLNGRASVYCPLCQP). Catalysis depends on Arg-295, which acts as the Proton donor; for delta-elimination activity.

It belongs to the FPG family. As to quaternary structure, monomer. Zn(2+) serves as cofactor.

The enzyme catalyses Hydrolysis of DNA containing ring-opened 7-methylguanine residues, releasing 2,6-diamino-4-hydroxy-5-(N-methyl)formamidopyrimidine.. It carries out the reaction 2'-deoxyribonucleotide-(2'-deoxyribose 5'-phosphate)-2'-deoxyribonucleotide-DNA = a 3'-end 2'-deoxyribonucleotide-(2,3-dehydro-2,3-deoxyribose 5'-phosphate)-DNA + a 5'-end 5'-phospho-2'-deoxyribonucleoside-DNA + H(+). Its function is as follows. Involved in base excision repair of DNA damaged by oxidation or by mutagenic agents. Acts as a DNA glycosylase that recognizes and removes damaged bases. Has a preference for oxidized purines, such as 7,8-dihydro-8-oxoguanine (8-oxoG). Has AP (apurinic/apyrimidinic) lyase activity and introduces nicks in the DNA strand. Cleaves the DNA backbone by beta-delta elimination to generate a single-strand break at the site of the removed base with both 3'- and 5'-phosphates. This chain is Formamidopyrimidine-DNA glycosylase, found in Psychrobacter arcticus (strain DSM 17307 / VKM B-2377 / 273-4).